Here is a 115-residue protein sequence, read N- to C-terminus: Parathyroid hormone (115 aa).

Positions 1–25 are cleaved as a signal peptide; the sequence is MMSAKNMVKVMIVMFAIFLLAKSDG. Residues 26 to 31 constitute a propeptide that is removed on maturation; sequence KPVRKR. The tract at residues 51-69 is important for receptor binding; that stretch reads RVEWLRKKLQDVHNFIALG. The tract at residues 73 to 115 is disordered; sequence FHRDGGSQRPRKKEDNVLIESHQKSLGEADKADVDVLSKTKSQ.

The protein belongs to the parathyroid hormone family. In terms of assembly, interacts with PTH1R (via N-terminal extracellular domain).

The protein localises to the secreted. In terms of biological role, parathyroid hormone elevates calcium level by dissolving the salts in bone and preventing their renal excretion. Acts by binding to its receptor, PTH1R, activating G protein-coupled receptor signaling. Stimulates [1-14C]-2-deoxy-D-glucose (2DG) transport and glycogen synthesis in osteoblastic cells. In Equus caballus (Horse), this protein is Parathyroid hormone (PTH).